Consider the following 171-residue polypeptide: Endoribonuclease YbeY (171 aa).

Zn(2+)-binding residues include H126, H130, and H136.

This sequence belongs to the endoribonuclease YbeY family. Requires Zn(2+) as cofactor.

The protein localises to the cytoplasm. Its function is as follows. Single strand-specific metallo-endoribonuclease involved in late-stage 70S ribosome quality control and in maturation of the 3' terminus of the 16S rRNA. The protein is Endoribonuclease YbeY of Rhizobium etli (strain ATCC 51251 / DSM 11541 / JCM 21823 / NBRC 15573 / CFN 42).